An 875-amino-acid polypeptide reads, in one-letter code: Probable inorganic carbon transporter subunit DabA (875 aa).

Zn(2+) contacts are provided by Cys380, Asp382, His563, and Cys578.

Belongs to the inorganic carbon transporter (TC 9.A.2) DabA family. In terms of assembly, forms a complex with DabB. Requires Zn(2+) as cofactor.

It is found in the cell membrane. In terms of biological role, part of an energy-coupled inorganic carbon pump. This Geobacillus thermodenitrificans (strain NG80-2) protein is Probable inorganic carbon transporter subunit DabA.